The following is a 129-amino-acid chain: Large ribosomal subunit protein bL20 (129 aa).

Belongs to the bacterial ribosomal protein bL20 family.

In terms of biological role, binds directly to 23S ribosomal RNA and is necessary for the in vitro assembly process of the 50S ribosomal subunit. It is not involved in the protein synthesizing functions of that subunit. The chain is Large ribosomal subunit protein bL20 from Kineococcus radiotolerans (strain ATCC BAA-149 / DSM 14245 / SRS30216).